Consider the following 214-residue polypeptide: Probable transaldolase (214 aa).

The active-site Schiff-base intermediate with substrate is the Lys-83.

Belongs to the transaldolase family. Type 3B subfamily.

Its subcellular location is the cytoplasm. The enzyme catalyses D-sedoheptulose 7-phosphate + D-glyceraldehyde 3-phosphate = D-erythrose 4-phosphate + beta-D-fructose 6-phosphate. The protein operates within carbohydrate degradation; pentose phosphate pathway; D-glyceraldehyde 3-phosphate and beta-D-fructose 6-phosphate from D-ribose 5-phosphate and D-xylulose 5-phosphate (non-oxidative stage): step 2/3. Transaldolase is important for the balance of metabolites in the pentose-phosphate pathway. The polypeptide is Probable transaldolase (Citrifermentans bemidjiense (strain ATCC BAA-1014 / DSM 16622 / JCM 12645 / Bem) (Geobacter bemidjiensis)).